Reading from the N-terminus, the 955-residue chain is 2-oxoglutarate dehydrogenase E1 component (955 aa).

It belongs to the alpha-ketoglutarate dehydrogenase family. Homodimer. Part of the 2-oxoglutarate dehydrogenase (OGDH) complex composed of E1 (2-oxoglutarate dehydrogenase), E2 (dihydrolipoamide succinyltransferase) and E3 (dihydrolipoamide dehydrogenase); the complex contains multiple copies of the three enzymatic components (E1, E2 and E3). Thiamine diphosphate serves as cofactor.

It catalyses the reaction N(6)-[(R)-lipoyl]-L-lysyl-[protein] + 2-oxoglutarate + H(+) = N(6)-[(R)-S(8)-succinyldihydrolipoyl]-L-lysyl-[protein] + CO2. Functionally, E1 component of the 2-oxoglutarate dehydrogenase (OGDH) complex which catalyzes the decarboxylation of 2-oxoglutarate, the first step in the conversion of 2-oxoglutarate to succinyl-CoA and CO(2). In Bacillus cereus (strain 03BB102), this protein is 2-oxoglutarate dehydrogenase E1 component.